The chain runs to 128 residues: Small ribosomal subunit protein uS9 (128 aa).

A compositionally biased stretch (basic and acidic residues) spans 97 to 113 (RSEGFMTRDPRSVERKK). A disordered region spans residues 97–128 (RSEGFMTRDPRSVERKKPGQPKARRRFQFSKR). The span at 114–128 (PGQPKARRRFQFSKR) shows a compositional bias: basic residues.

Belongs to the universal ribosomal protein uS9 family.

This is Small ribosomal subunit protein uS9 from Bacteroides fragilis (strain ATCC 25285 / DSM 2151 / CCUG 4856 / JCM 11019 / LMG 10263 / NCTC 9343 / Onslow / VPI 2553 / EN-2).